Here is a 1024-residue protein sequence, read N- to C-terminus: DNA-directed RNA polymerase subunit beta (1024 aa).

It belongs to the RNA polymerase beta chain family. In terms of assembly, in plastids the minimal PEP RNA polymerase catalytic core is composed of four subunits: alpha, beta, beta', and beta''. When a (nuclear-encoded) sigma factor is associated with the core the holoenzyme is formed, which can initiate transcription (Potential).

It localises to the plastid. The protein localises to the apicoplast. The catalysed reaction is RNA(n) + a ribonucleoside 5'-triphosphate = RNA(n+1) + diphosphate. Functionally, DNA-dependent RNA polymerase catalyzes the transcription of DNA into RNA using the four ribonucleoside triphosphates as substrates. This is DNA-directed RNA polymerase subunit beta (rpoB) from Plasmodium falciparum (isolate 3D7).